Consider the following 349-residue polypeptide: Ribosome production factor 1 (349 aa).

2 disordered regions span residues Met-1 to Lys-58 and Lys-71 to Ile-105. Basic and acidic residues predominate over residues Lys-87–Pro-97. The region spanning Pro-142 to Asp-325 is the Brix domain. The interval Val-303 to Gln-320 is RNA-binding.

It localises to the nucleus. It is found in the nucleolus. May be required for ribosome biogenesis. The polypeptide is Ribosome production factor 1 (Rpf1) (Mus musculus (Mouse)).